We begin with the raw amino-acid sequence, 184 residues long: Thymidine kinase (184 aa).

ATP contacts are provided by residues 9-16 and 82-85; these read AAMNSGKS and DEAQ. Glutamate 83 serves as the catalytic Proton acceptor. The Zn(2+) site is built by cysteine 140, cysteine 142, cysteine 177, and cysteine 180.

Belongs to the thymidine kinase family. In terms of assembly, homotetramer.

The protein localises to the cytoplasm. The enzyme catalyses thymidine + ATP = dTMP + ADP + H(+). The polypeptide is Thymidine kinase (Chromobacterium violaceum (strain ATCC 12472 / DSM 30191 / JCM 1249 / CCUG 213 / NBRC 12614 / NCIMB 9131 / NCTC 9757 / MK)).